We begin with the raw amino-acid sequence, 78 residues long: Probable Fe(2+)-trafficking protein (78 aa).

Belongs to the Fe(2+)-trafficking protein family. Monomer.

Could be a mediator in iron transactions between iron acquisition and iron-requiring processes, such as synthesis and/or repair of Fe-S clusters in biosynthetic enzymes. The chain is Probable Fe(2+)-trafficking protein from Buchnera aphidicola subsp. Schizaphis graminum (strain Sg).